Consider the following 419-residue polypeptide: MKLRAQFDRGTYSESKGSFKLRDSLDPMQPEPSSREGNGLSLTLQPELLARMPGAGSSSGTETGEDVRVPMGSSSGSTNGRGATSRRMRTASHSHSHTHGHGHSHEHESDSGESDLESGESSSSISELRYLLRWLKKSLPFIVILCAKLVIQHALGLAVAVGLFTTFMYVNKSIQTQVFLHDRRTNLHCAWLLLFLTSSSLLVFYTFHTQSLYRCLFFANATIDYHNFWEVLWSVGVTNFILKFIFMGFKCLILLVPCPLMTYRRRGQWYMLIEEVGQLYQVIAPVPLWFRYLVSYDEMDTSVGLTLGILLALLYLIMKLLALYGLSGSLQKTLRTFFSPEVNGAPASPAQIREAGDICPICQADFKQPRVLVCQHIFCEECIAQWLNQERTCPLCRTVITDKVHKWKDGATSAHLQIY.

The tract at residues 1–120 (MKLRAQFDRG…SGESDLESGE (120 aa)) is disordered. 2 stretches are compositionally biased toward polar residues: residues 31–44 (EPSS…SLTL) and 72–82 (GSSSGSTNGRG). Basic residues predominate over residues 84–102 (TSRRMRTASHSHSHTHGHG). Helical transmembrane passes span 141–161 (FIVI…AVAV), 187–207 (LHCA…FYTF), 217–237 (FFAN…SVGV), 240–260 (FILK…PCPL), 270–290 (YMLI…PLWF), and 303–323 (VGLT…LLAL). The segment at 352-403 (IREAGDICPICQADFKQPRVLVCQHIFCEECIAQWLNQERTCPLCRTVITDK) is required for ubiquitin ligase activity and for protection against ER stress-induced cell death. Residues 359–397 (CPICQADFKQPRVLVCQHIFCEECIAQWLNQERTCPLCR) form an RING-type zinc finger.

The protein resides in the endoplasmic reticulum membrane. The catalysed reaction is S-ubiquitinyl-[E2 ubiquitin-conjugating enzyme]-L-cysteine + [acceptor protein]-L-lysine = [E2 ubiquitin-conjugating enzyme]-L-cysteine + N(6)-ubiquitinyl-[acceptor protein]-L-lysine.. Its pathway is protein modification; protein ubiquitination. E3 ubiquitin-protein ligase that acts in the endoplasmic reticulum (ER)-associated degradation (ERAD) pathway, which targets misfolded proteins that accumulate in the endoplasmic reticulum (ER) for ubiquitination and subsequent proteasome-mediated degradation. Protects cells from ER stress-induced apoptosis. This chain is E3 ubiquitin-protein ligase RNFT1 (rnft1), found in Danio rerio (Zebrafish).